Here is a 133-residue protein sequence, read N- to C-terminus: Small ribosomal subunit protein uS8 (133 aa).

This sequence belongs to the universal ribosomal protein uS8 family. Part of the 30S ribosomal subunit. Contacts proteins S5 and S12.

One of the primary rRNA binding proteins, it binds directly to 16S rRNA central domain where it helps coordinate assembly of the platform of the 30S subunit. The chain is Small ribosomal subunit protein uS8 from Leptospira interrogans serogroup Icterohaemorrhagiae serovar copenhageni (strain Fiocruz L1-130).